We begin with the raw amino-acid sequence, 388 residues long: MKTLLYWGWSSLAGLILFSILAHGEMKTFNESNGTNANVLMVGLTLVQAAAAKGAVCLDGSVPGYHLCRGYGSGANNWIIQLQGGAWCDSIQNCQSRKGSGYGSSTLMEKELAFLGLLSNKAAENPDFYNWNKVKVRYCDGASFDGDSENKAAQLQYRGKRIFLAVMEDLMEKGMRQAKQALLSGCSSGGLSAILRCDDFNNLFPPTTTVKCMSDAGFFLDAVDVSGGHSLRRMYSGVVNTQGLQNTLPPTCTSHIKPFLCFFPQYIINQVKTPLFILNSGFDSWQIGNSLAPPSADKSGSWHNCSFSFRCTASQMHFLEGFKMSMLDALKTFSKFSKNGVLITSGWAHCQAERQDTWFPGYSGAGKAKGIAVAVGDWYFERTKQNSS.

Residues 1–24 form the signal peptide; it reads MKTLLYWGWSSLAGLILFSILAHG. 2 N-linked (GlcNAc...) asparagine glycosylation sites follow: Asn30 and Asn33. Active-site charge relay system residues include Ser187 and Asp283. N-linked (GlcNAc...) asparagine glycosylation is present at Asn304. His349 serves as the catalytic Charge relay system.

The protein belongs to the pectinacetylesterase family.

The protein localises to the secreted. The protein resides in the cell wall. Its function is as follows. Hydrolyzes acetyl esters in homogalacturonan regions of pectin. In type I primary cell wall, galacturonic acid residues of pectin can be acetylated at the O-2 and O-3 positions. Decreasing the degree of acetylation of pectin gels in vitro alters their physical properties. This Arabidopsis thaliana (Mouse-ear cress) protein is Pectin acetylesterase 1.